The primary structure comprises 539 residues: MVDDNGSSPEVEGAEGAGAPLLALLRVDGLNQTQTRSPSPSFFGSYNISEDVYFYFNGLPTSTELVLNATTSATSATLSPAMVATGGGGTTTPEPDLSEFLEALPNDRVGLLAFLFLFSFATVFGNSLVILAVIRERYLHTATNYFITSLAVADCLVGLVVMPFSALYEVLENTWFFGTDWCDIWRSLDVLFSTASILNLCVISLDRYWAITDPFSYPMRMTVKRAAGLIAAVWICSSAISFPAIVWWRAARDGEMPAYKCTFTEHLGYLVFSSTISFYLPLLVMVFTYCRIYRAAVIQTRSLKIGTKQVLMASGELQLTLRIHRGGTTRDQQNQVSGGGGGGGGGGGGGGSLSHSHSHSHHHHHNHGGGTTTSTPEEPDDEPLSALHNNGLARHRHMGKNFSLSRKLAKFAKEKKAAKTLGIVMGVFIICWLPFFVVNLLSGFCIECIEHEEIVSAIVTWLGWINSCMNPVIYACWSRDFRRAFVRLLCMCCPRKIRRKYQPTMRSKSQRFATRRCYSTCSLHGIQHVRHNSCEQTYI.

Over 1 to 113 (MVDDNGSSPE…LPNDRVGLLA (113 aa)) the chain is Extracellular. Asn5, Asn31, Asn47, and Asn68 each carry an N-linked (GlcNAc...) asparagine glycan. Residues 114–134 (FLFLFSFATVFGNSLVILAVI) form a helical membrane-spanning segment. The Cytoplasmic portion of the chain corresponds to 135–145 (RERYLHTATNY). Residues 146-166 (FITSLAVADCLVGLVVMPFSA) form a helical membrane-spanning segment. Residues 167–189 (LYEVLENTWFFGTDWCDIWRSLD) lie on the Extracellular side of the membrane. Cys182 and Cys261 form a disulfide bridge. Residues 190–206 (VLFSTASILNLCVISLD) traverse the membrane as a helical segment. Residues 207–227 (RYWAITDPFSYPMRMTVKRAA) lie on the Cytoplasmic side of the membrane. The chain crosses the membrane as a helical span at residues 228–248 (GLIAAVWICSSAISFPAIVWW). The Extracellular segment spans residues 249-266 (RAARDGEMPAYKCTFTEH). Residues 267–287 (LGYLVFSSTISFYLPLLVMVF) form a helical membrane-spanning segment. Topologically, residues 288–420 (TYCRIYRAAV…FAKEKKAAKT (133 aa)) are cytoplasmic. The disordered stretch occupies residues 326-387 (GGTTRDQQNQ…EPDDEPLSAL (62 aa)). Gly residues predominate over residues 337-352 (SGGGGGGGGGGGGGGS). Over residues 356–367 (SHSHSHHHHHNH) the composition is skewed to basic residues. A helical membrane pass occupies residues 421 to 441 (LGIVMGVFIICWLPFFVVNLL). The Extracellular segment spans residues 442 to 453 (SGFCIECIEHEE). A helical transmembrane segment spans residues 454 to 474 (IVSAIVTWLGWINSCMNPVIY). The Cytoplasmic portion of the chain corresponds to 475-539 (ACWSRDFRRA…RHNSCEQTYI (65 aa)). S-palmitoyl cysteine attachment occurs at residues Cys492 and Cys493.

This sequence belongs to the G-protein coupled receptor 1 family. As to expression, expressed in both central and peripheral nervous systems.

Its subcellular location is the cell membrane. Its function is as follows. Receptor for dopamine. The activity of this receptor is mediated by G proteins which activate adenylyl cyclase. Also capable of generating a calcium signal. In terms of antagonist responses, would be classed with the D1-like dopamine receptor group. This receptor is an attractive candidate for initiating biochemical cascades underlying olfactory learning. This Drosophila melanogaster (Fruit fly) protein is Dopamine receptor 2 (Dop1R2).